A 187-amino-acid chain; its full sequence is Orotate phosphoribosyltransferase (187 aa).

5-phospho-alpha-D-ribose 1-diphosphate-binding positions include Arg-99, Lys-100, Lys-103, His-105, and Asp-125–Ser-133. Residues Thr-129 and Arg-157 each contribute to the orotate site.

The protein belongs to the purine/pyrimidine phosphoribosyltransferase family. PyrE subfamily. In terms of assembly, homodimer. Mg(2+) is required as a cofactor.

It catalyses the reaction orotidine 5'-phosphate + diphosphate = orotate + 5-phospho-alpha-D-ribose 1-diphosphate. It functions in the pathway pyrimidine metabolism; UMP biosynthesis via de novo pathway; UMP from orotate: step 1/2. Its function is as follows. Catalyzes the transfer of a ribosyl phosphate group from 5-phosphoribose 1-diphosphate to orotate, leading to the formation of orotidine monophosphate (OMP). This is Orotate phosphoribosyltransferase from Leptospira borgpetersenii serovar Hardjo-bovis (strain JB197).